The sequence spans 78 residues: Large ribosomal subunit protein bL28 (78 aa).

The disordered stretch occupies residues Met-1–Ala-24.

It belongs to the bacterial ribosomal protein bL28 family.

The chain is Large ribosomal subunit protein bL28 from Aeromonas salmonicida (strain A449).